The sequence spans 369 residues: GDSL esterase/lipase At5g42170 (369 aa).

Residues 1 to 16 form the signal peptide; sequence MSRLVYVIFLLVVVEG. Asn-28 and Asn-45 each carry an N-linked (GlcNAc...) asparagine glycan. Catalysis depends on Ser-57, which acts as the Nucleophile. N-linked (GlcNAc...) asparagine glycans are attached at residues Asn-203 and Asn-336. Active-site residues include Asp-344 and His-347.

It belongs to the 'GDSL' lipolytic enzyme family.

It is found in the secreted. The polypeptide is GDSL esterase/lipase At5g42170 (Arabidopsis thaliana (Mouse-ear cress)).